The sequence spans 68 residues: Protein P33 (68 aa).

The stretch at 34–63 (IVNLQGRIAELEARETEMLARVDTLIARLA) forms a coiled coil.

In terms of biological role, assembly protein. This Acinetobacter calcoaceticus (Arthrobacter siderocapsulatus) protein is Protein P33 (XXXIII).